Consider the following 342-residue polypeptide: Uricase (342 aa).

Catalysis depends on charge relay system residues K35 and T80. 7 residues coordinate urate: T80, D81, F204, R221, V269, Q270, and N296. H298 (charge relay system) is an active-site residue. Positions 340–342 (SHL) match the Microbody targeting signal motif.

It belongs to the uricase family. Malpighian tubules.

The protein localises to the peroxisome. It catalyses the reaction urate + O2 + H2O = 5-hydroxyisourate + H2O2. It participates in purine metabolism; urate degradation; (S)-allantoin from urate: step 1/3. Its activity is regulated as follows. Repressed by 20-hydroxyecdysone. Catalyzes the oxidation of uric acid to 5-hydroxyisourate, which is further processed to form (S)-allantoin. The protein is Uricase (Uro) of Drosophila virilis (Fruit fly).